The sequence spans 259 residues: 3-deoxy-manno-octulosonate cytidylyltransferase (259 aa).

This sequence belongs to the KdsB family.

It localises to the cytoplasm. It carries out the reaction 3-deoxy-alpha-D-manno-oct-2-ulosonate + CTP = CMP-3-deoxy-beta-D-manno-octulosonate + diphosphate. Its pathway is nucleotide-sugar biosynthesis; CMP-3-deoxy-D-manno-octulosonate biosynthesis; CMP-3-deoxy-D-manno-octulosonate from 3-deoxy-D-manno-octulosonate and CTP: step 1/1. It functions in the pathway bacterial outer membrane biogenesis; lipopolysaccharide biosynthesis. Activates KDO (a required 8-carbon sugar) for incorporation into bacterial lipopolysaccharide in Gram-negative bacteria. In Aeromonas salmonicida (strain A449), this protein is 3-deoxy-manno-octulosonate cytidylyltransferase.